A 262-amino-acid chain; its full sequence is Undecaprenyl-diphosphatase (262 aa).

8 consecutive transmembrane segments (helical) span residues 15–35, 38–58, 91–111, 114–134, 149–169, 189–209, 219–239, and 242–262; these read LTEW…IILL, SSAA…IVAF, LYIL…AKYV, IFGS…LLYS, ALIV…RSGA, FLLS…VSPA, VGLL…LSII, and GRLH…LSLL.

It belongs to the UppP family.

It localises to the cell membrane. It catalyses the reaction di-trans,octa-cis-undecaprenyl diphosphate + H2O = di-trans,octa-cis-undecaprenyl phosphate + phosphate + H(+). Functionally, catalyzes the dephosphorylation of undecaprenyl diphosphate (UPP). In Korarchaeum cryptofilum (strain OPF8), this protein is Undecaprenyl-diphosphatase.